Consider the following 405-residue polypeptide: Argininosuccinate synthase (405 aa).

Residue 12-20 (AYSGGLDTS) coordinates ATP. L-citrulline is bound by residues Tyr-92 and Ser-97. Gly-122 lines the ATP pocket. L-aspartate contacts are provided by Thr-124, Asn-128, and Asp-129. Asn-128 contributes to the L-citrulline binding site. Positions 132, 181, 190, 266, and 278 each coordinate L-citrulline.

The protein belongs to the argininosuccinate synthase family. Type 1 subfamily. As to quaternary structure, homotetramer.

Its subcellular location is the cytoplasm. The enzyme catalyses L-citrulline + L-aspartate + ATP = 2-(N(omega)-L-arginino)succinate + AMP + diphosphate + H(+). It participates in amino-acid biosynthesis; L-arginine biosynthesis; L-arginine from L-ornithine and carbamoyl phosphate: step 2/3. The protein is Argininosuccinate synthase of Cronobacter sakazakii (strain ATCC BAA-894) (Enterobacter sakazakii).